Here is a 221-residue protein sequence, read N- to C-terminus: GDP-perosamine N-acetyltransferase (221 aa).

Catalysis depends on His139, which acts as the Proton acceptor.

It belongs to the transferase hexapeptide repeat family. As to quaternary structure, homotrimer.

The catalysed reaction is GDP-alpha-D-perosamine + acetyl-CoA = GDP-N-acetyl-alpha-D-perosamine + CoA + H(+). Its pathway is bacterial outer membrane biogenesis; LPS O-antigen biosynthesis. Functionally, catalyzes the transfer of an acetyl residue from acetyl-CoA onto GDP-perosamine to form GDP-N-acetyl-perosamine. The chain is GDP-perosamine N-acetyltransferase from Escherichia coli O157:H7.